The following is a 737-amino-acid chain: LIMR family protein R05D3.2 (737 aa).

Residues 280–293 (ADIEEENSEQSEDV) show a composition bias toward acidic residues. Positions 280-416 (ADIEEENSEQ…PKKPKNPNFD (137 aa)) are disordered. Over residues 303-318 (ETIHQVDRSDTPHLED) the composition is skewed to basic and acidic residues.

Belongs to the LIMR family.

The protein is LIMR family protein R05D3.2 of Caenorhabditis elegans.